The sequence spans 575 residues: MSNLLWKSLVVSPAVLGATLLVSSAAIAATNATTELSVTETVVPTELAQQPEIVAQAAPITEDTKVIDQVNRYSNEGKGNAQSQVTSVSQFSDVQPTDWAFQALQSLVERYGCIAGYPNGTYRGNRALTRYEFAAGLNACLDRVNELIATATADLVTKQDLATLQRLQEEFSAELATLRGRVDALEARTAELEANQFSTTTKLVGEAIFAVTDAFGENTGDANNTVFQNRVRLGLQTSFTGRDVLTTRLAAGNATGFDFRDNNNNSIGASGQGLQTFQVGSTGNNNVEIDRLTYEAPFGPAQVYLAASGGRHSHYAAVNNPYFFDKTDGGNGALSTFSSENPIYRIGGGAGIAFNVPFGQGGSILRPSSFTVGYLASDANNPGPNQGLFNGDYAALGQLNFSVGDRLALAATYVHGYHGASGSALFDSGANGAIVGTSLANNNSFLNASSSNSYGLSAAFRPSDKLSVSGFVSYSDVTGFGANDDREVWSYGIGVALPDFGKRGNVLGIFAGAQPYARGVQAGANEVPYQVEGFYKYRVSDNISITPGVIWVTNPGQNSNADDAIIGTLRTTFTF.

The first 28 residues, 1-28 (MSNLLWKSLVVSPAVLGATLLVSSAAIA), serve as a signal peptide directing secretion. Positions 87 to 151 (SVSQFSDVQP…DRVNELIATA (65 aa)) constitute an SLH domain. Residues 158–196 (KQDLATLQRLQEEFSAELATLRGRVDALEARTAELEANQ) are a coiled coil.

Belongs to the OprB family.

This is an uncharacterized protein from Nostoc sp. (strain PCC 7120 / SAG 25.82 / UTEX 2576).